Here is a 98-residue protein sequence, read N- to C-terminus: NADH-ubiquinone oxidoreductase chain 4L (98 aa).

Helical transmembrane passes span 1–21, 29–49, and 61–81; these read MPVI…GLLI, SLLC…TLAL, and IILL…LVMV.

The protein belongs to the complex I subunit 4L family. In terms of assembly, core subunit of respiratory chain NADH dehydrogenase (Complex I) which is composed of 45 different subunits.

The protein localises to the mitochondrion inner membrane. The catalysed reaction is a ubiquinone + NADH + 5 H(+)(in) = a ubiquinol + NAD(+) + 4 H(+)(out). Functionally, core subunit of the mitochondrial membrane respiratory chain NADH dehydrogenase (Complex I) which catalyzes electron transfer from NADH through the respiratory chain, using ubiquinone as an electron acceptor. Part of the enzyme membrane arm which is embedded in the lipid bilayer and involved in proton translocation. In Echinops telfairi (Lesser hedgehog tenrec), this protein is NADH-ubiquinone oxidoreductase chain 4L (MT-ND4L).